Here is a 318-residue protein sequence, read N- to C-terminus: Phosphatidylglycerol--prolipoprotein diacylglyceryl transferase (318 aa).

The next 3 helical transmembrane spans lie at 24–44 (GPSTFSILMMIGFLTASYLLP), 60–80 (LLLLGILGTLVGAKIFFVFEI), and 115–135 (LFSGSGLVFYGGFLFGILFIT). Arginine 164 lines the a 1,2-diacyl-sn-glycero-3-phospho-(1'-sn-glycerol) pocket. 2 helical membrane-spanning segments follow: residues 198–218 (VPVWNTPLIESIISFLFFFYF) and 285–305 (GFSQSQLVSIIIILVGAFFIL).

It belongs to the Lgt family.

The protein localises to the cell inner membrane. The catalysed reaction is L-cysteinyl-[prolipoprotein] + a 1,2-diacyl-sn-glycero-3-phospho-(1'-sn-glycerol) = an S-1,2-diacyl-sn-glyceryl-L-cysteinyl-[prolipoprotein] + sn-glycerol 1-phosphate + H(+). It participates in protein modification; lipoprotein biosynthesis (diacylglyceryl transfer). Catalyzes the transfer of the diacylglyceryl group from phosphatidylglycerol to the sulfhydryl group of the N-terminal cysteine of a prolipoprotein, the first step in the formation of mature lipoproteins. This is Phosphatidylglycerol--prolipoprotein diacylglyceryl transferase from Leptospira interrogans serogroup Icterohaemorrhagiae serovar copenhageni (strain Fiocruz L1-130).